Consider the following 171-residue polypeptide: S-ribosylhomocysteine lyase (171 aa).

Fe cation-binding residues include H54, H58, and C128.

Belongs to the LuxS family. Homodimer. Fe cation is required as a cofactor.

It catalyses the reaction S-(5-deoxy-D-ribos-5-yl)-L-homocysteine = (S)-4,5-dihydroxypentane-2,3-dione + L-homocysteine. In terms of biological role, involved in the synthesis of autoinducer 2 (AI-2) which is secreted by bacteria and is used to communicate both the cell density and the metabolic potential of the environment. The regulation of gene expression in response to changes in cell density is called quorum sensing. Catalyzes the transformation of S-ribosylhomocysteine (RHC) to homocysteine (HC) and 4,5-dihydroxy-2,3-pentadione (DPD). In Shigella boydii serotype 4 (strain Sb227), this protein is S-ribosylhomocysteine lyase.